We begin with the raw amino-acid sequence, 282 residues long: Glutamyl endopeptidase (282 aa).

A signal peptide spans 1 to 27 (MKKRFLSICTMTIAALATTTMVNTSYA). A propeptide spanning residues 28–66 (KTDTESHNHSSLGTENKNVLDINSSSHNIKPSQNKSYPS) is cleaved from the precursor. Active-site charge relay system residues include His117, Asp159, and Ser235.

This sequence belongs to the peptidase S1B family.

It is found in the secreted. It catalyses the reaction Preferential cleavage: Glu-|-Xaa, Asp-|-Xaa.. Its function is as follows. Exhibits a significant hydrolytic activity for the carbonyl side of glutamic acid. Shows activity toward human fibronectin and type 1 collagen. The sequence is that of Glutamyl endopeptidase (gseA) from Staphylococcus epidermidis (strain ATCC 35984 / DSM 28319 / BCRC 17069 / CCUG 31568 / BM 3577 / RP62A).